Here is a 72-residue protein sequence, read N- to C-terminus: Heat-stable enterotoxin A3/A4 (72 aa).

The first 19 residues, 1–19, serve as a signal peptide directing secretion; it reads MKKSILFIFLSVLSFSPFA. Residues 20–53 constitute a propeptide that is removed on maturation; that stretch reads QDAKPVESSKEKITLESKKCNIAKKSNKSGPESM. Disulfide bonds link Cys59/Cys64, Cys60/Cys68, and Cys63/Cys71.

Belongs to the heat-stable enterotoxin family.

Its subcellular location is the secreted. Its function is as follows. Toxin which activates the particulate form of guanylate cyclase and increases cyclic GMP levels within the host intestinal epithelial cells. This Escherichia coli protein is Heat-stable enterotoxin A3/A4 (sta3).